The sequence spans 239 residues: Adapter protein MecA (239 aa).

The span at 118–128 shows a compositional bias: basic and acidic residues; that stretch reads EQRTKEKEAQG. The interval 118–137 is disordered; sequence EQRTKEKEAQGSKRQKSSAR.

Belongs to the MecA family. Homodimer.

Functionally, enables the recognition and targeting of unfolded and aggregated proteins to the ClpC protease or to other proteins involved in proteolysis. The protein is Adapter protein MecA of Staphylococcus aureus (strain Mu3 / ATCC 700698).